Reading from the N-terminus, the 443-residue chain is uncharacterized protein (443 aa).

4 helical membrane passes run 15–35 (IYAG…DGLA), 38–58 (LGMA…GPGS), 59–79 (AWQG…LSWL), and 181–201 (VVTA…IPAL). Residues 231–270 (NFGIGNIGNANLGNGNIGNANLGSGNAGFFNFGNGNDGNT) are 4 X 10 AA approximate repeats.

The protein belongs to the mycobacterial PPE family.

Its subcellular location is the cell membrane. This is an uncharacterized protein from Mycobacterium tuberculosis (strain ATCC 25618 / H37Rv).